A 145-amino-acid polypeptide reads, in one-letter code: Putative pre-16S rRNA nuclease (145 aa).

It belongs to the YqgF nuclease family.

The protein resides in the cytoplasm. Could be a nuclease involved in processing of the 5'-end of pre-16S rRNA. This chain is Putative pre-16S rRNA nuclease, found in Microcystis aeruginosa (strain NIES-843 / IAM M-2473).